A 594-amino-acid polypeptide reads, in one-letter code: Elongation factor 4 (594 aa).

Residues 2–184 (KNIRNFSIIA…TIVAKVPAPE (183 aa)) form the tr-type G domain. Residues 14–19 (DHGKST) and 131–134 (NKID) contribute to the GTP site.

Belongs to the TRAFAC class translation factor GTPase superfamily. Classic translation factor GTPase family. LepA subfamily.

The protein localises to the cell inner membrane. The catalysed reaction is GTP + H2O = GDP + phosphate + H(+). Functionally, required for accurate and efficient protein synthesis under certain stress conditions. May act as a fidelity factor of the translation reaction, by catalyzing a one-codon backward translocation of tRNAs on improperly translocated ribosomes. Back-translocation proceeds from a post-translocation (POST) complex to a pre-translocation (PRE) complex, thus giving elongation factor G a second chance to translocate the tRNAs correctly. Binds to ribosomes in a GTP-dependent manner. In Francisella philomiragia subsp. philomiragia (strain ATCC 25017 / CCUG 19701 / FSC 153 / O#319-036), this protein is Elongation factor 4.